We begin with the raw amino-acid sequence, 758 residues long: Probable C-mannosyltransferase DPY19L2 (758 aa).

Residues 1–58 are disordered; that stretch reads MRKQGVSSKRLQSSGRSQSKGRRGASLAREPEVEEEMEKSALGGGKLPRGSWRSSPGR. Residues 1–107 are Nuclear-facing; it reads MRKQGVSSKR…ELQARRFSSR (107 aa). The segment covering 7–18 has biased composition (low complexity); that stretch reads SSKRLQSSGRSQ. A helical transmembrane segment spans residues 108-128; that stretch reads TTLGIAVFVAILHWLHLVTLF. The Perinuclear space segment spans residues 129-194; that stretch reads ENDRHFSHLS…INAIKRFHLY (66 aa). The chain crosses the membrane as a helical span at residues 195 to 215; the sequence is PEVIIASWYCTFMGIMNLFGL. The Nuclear portion of the chain corresponds to 216 to 241; that stretch reads ETKTCWNVTRIEPLNEVQSCEGLGDP. 2 helical membrane-spanning segments follow: residues 242–262 and 263–283; these read ACFY…LFFM and YGAY…CFFF. The Nuclear portion of the chain corresponds to 284–296; sequence NHGEATRVMWTPP. The helical transmembrane segment at 297 to 317 threads the bilayer; sequence LRESFSYPFLVLQMCILTLIL. The Perinuclear space segment spans residues 318–343; it reads RTSSNDRRPFIALCLSNVAFMLPWQF. Residues 344–364 traverse the membrane as a helical segment; the sequence is AQFILFTQIASLFPMYVVGYI. Topologically, residues 365–371 are nuclear; the sequence is EPSKFQK. The chain crosses the membrane as a helical span at residues 372–392; that stretch reads IIYMNMISVTLSFILMFGNSM. Over 393–422 the chain is Perinuclear space; it reads YLSSYYSSSLLMTWAIILKRNEIQKLGVSK. The chain crosses the membrane as a helical span at residues 423–443; sequence LNFWLIQGSAWWCGTIILKFL. The Nuclear portion of the chain corresponds to 444–488; that stretch reads TSKILGVSDHIRLSDLIAARILRYTDFDTLIYTCAPEFDFMEKAT. A helical transmembrane segment spans residues 489–509; that stretch reads PLRYTKTLLLPVVMVITCFIF. Over 510 to 533 the chain is Perinuclear space; that stretch reads KKTVRDISYVLATNIYLRKQLLEH. The helical transmembrane segment at 534-554 threads the bilayer; sequence SELAFHTLQLLVFTALAILIM. Topologically, residues 555 to 758 are nuclear; sequence RLKMFLTPHM…NSVYRVLKVN (204 aa).

It belongs to the dpy-19 family. As to quaternary structure, interacts with FAM209. In terms of tissue distribution, widely expressed with high expression in testis. Not detectable in ejaculated sperm (at protein level).

It is found in the nucleus inner membrane. Its function is as follows. Probable C-mannosyltransferase that mediates C-mannosylation of tryptophan residues on target proteins. In terms of biological role, required during spermatogenesis for sperm head elongation and acrosome formation. Also plays a role in acrosome attachment to the nuclear envelope. The chain is Probable C-mannosyltransferase DPY19L2 from Homo sapiens (Human).